A 210-amino-acid polypeptide reads, in one-letter code: Chaperone protein TorD (210 aa).

Belongs to the TorD/DmsD family. TorD subfamily.

The protein resides in the cytoplasm. Its function is as follows. Involved in the biogenesis of TorA. Acts on TorA before the insertion of the molybdenum cofactor and, as a result, probably favors a conformation of the apoenzyme that is competent for acquiring the cofactor. This is Chaperone protein TorD from Salmonella schwarzengrund (strain CVM19633).